Here is a 293-residue protein sequence, read N- to C-terminus: Protein bcp-1 (293 aa).

The span at 1–12 (MGKKRSREEAQK) shows a compositional bias: basic and acidic residues. Residues 1 to 35 (MGKKRSREEAQKEVVQNDPTVDKMDEDSDSSDSDE) form a disordered region. A compositionally biased stretch (acidic residues) spans 24-35 (MDEDSDSSDSDE).

It belongs to the BCP1 family.

The protein resides in the cytoplasm. The protein localises to the nucleus. Its function is as follows. Involved in nuclear export, actin cytoskeleton organization and vesicular transport. The polypeptide is Protein bcp-1 (bcp-1) (Neurospora crassa (strain ATCC 24698 / 74-OR23-1A / CBS 708.71 / DSM 1257 / FGSC 987)).